The chain runs to 303 residues: UDP-3-O-acyl-N-acetylglucosamine deacetylase (303 aa).

Positions 78, 237, and 241 each coordinate Zn(2+). H264 acts as the Proton donor in catalysis.

Belongs to the LpxC family. The cofactor is Zn(2+).

The catalysed reaction is a UDP-3-O-[(3R)-3-hydroxyacyl]-N-acetyl-alpha-D-glucosamine + H2O = a UDP-3-O-[(3R)-3-hydroxyacyl]-alpha-D-glucosamine + acetate. Its pathway is glycolipid biosynthesis; lipid IV(A) biosynthesis; lipid IV(A) from (3R)-3-hydroxytetradecanoyl-[acyl-carrier-protein] and UDP-N-acetyl-alpha-D-glucosamine: step 2/6. Catalyzes the hydrolysis of UDP-3-O-myristoyl-N-acetylglucosamine to form UDP-3-O-myristoylglucosamine and acetate, the committed step in lipid A biosynthesis. The chain is UDP-3-O-acyl-N-acetylglucosamine deacetylase from Pseudomonas fluorescens (strain ATCC BAA-477 / NRRL B-23932 / Pf-5).